The chain runs to 234 residues: 2-phospho-L-lactate guanylyltransferase (234 aa).

The protein belongs to the CofC family. Homodimer.

The enzyme catalyses (2S)-2-phospholactate + GTP + H(+) = (2S)-lactyl-2-diphospho-5'-guanosine + diphosphate. Its pathway is cofactor biosynthesis; coenzyme F420 biosynthesis. Guanylyltransferase that catalyzes the activation of (2S)-2-phospholactate (2-PL) as (2S)-lactyl-2-diphospho-5'-guanosine, via the condensation of 2-PL with GTP. It is involved in the biosynthesis of coenzyme F420, a hydride carrier cofactor. The chain is 2-phospho-L-lactate guanylyltransferase from Methanobrevibacter ruminantium (strain ATCC 35063 / DSM 1093 / JCM 13430 / OCM 146 / M1) (Methanobacterium ruminantium).